The following is a 282-amino-acid chain: MIRVIAISNPRLAQAFIDYMATHQVHLTMRPSHDGQHVELWLEDDTKLTLVQQELEQFTRDPLNERYQAASWQSGDVNHPLKYHNNLNWQYLSRQAGPLTLTILLLNIVVYLWMQFAGDYQVMSWLAWPNDSQHMELWRWVTHGLLHFSLLHIIFNLMWWWYLGGQTEKHLGTGKLFVIMIVSAVFSGWGQSLFSGSHFGGLSGVVYALIGYVWLTGERAPERGIGVPRGLMAFSLFWLIVGYFDAFGLSIANAAHFSGLIIGLLMALWDNRHTFKNNNRHF.

6 helical membrane passes run 96-116 (AGPL…WMQF), 144-164 (GLLH…WYLG), 176-196 (LFVI…LFSG), 197-217 (SHFG…WLTG), 225-242 (IGVP…LIVG), and 247-269 (FGLS…MALW). Residue S203 is the Nucleophile of the active site. H256 is an active-site residue.

The protein belongs to the peptidase S54 family.

It localises to the cell inner membrane. The enzyme catalyses Cleaves type-1 transmembrane domains using a catalytic dyad composed of serine and histidine that are contributed by different transmembrane domains.. In terms of biological role, rhomboid-type serine protease that catalyzes intramembrane proteolysis. The protein is Rhomboid protease GlpG of Photorhabdus laumondii subsp. laumondii (strain DSM 15139 / CIP 105565 / TT01) (Photorhabdus luminescens subsp. laumondii).